The following is a 100-amino-acid chain: Urease subunit gamma (100 aa).

The protein belongs to the urease gamma subunit family. As to quaternary structure, heterotrimer of UreA (gamma), UreB (beta) and UreC (alpha) subunits. Three heterotrimers associate to form the active enzyme.

It is found in the cytoplasm. It catalyses the reaction urea + 2 H2O + H(+) = hydrogencarbonate + 2 NH4(+). It functions in the pathway nitrogen metabolism; urea degradation; CO(2) and NH(3) from urea (urease route): step 1/1. The chain is Urease subunit gamma from Arthrobacter sp. (strain FB24).